The following is a 517-amino-acid chain: UDP-N-acetylmuramoylalanine--D-glutamate ligase (517 aa).

143 to 149 (GTNGKTT) provides a ligand contact to ATP.

The protein belongs to the MurCDEF family.

It is found in the cytoplasm. The catalysed reaction is UDP-N-acetyl-alpha-D-muramoyl-L-alanine + D-glutamate + ATP = UDP-N-acetyl-alpha-D-muramoyl-L-alanyl-D-glutamate + ADP + phosphate + H(+). It participates in cell wall biogenesis; peptidoglycan biosynthesis. Its function is as follows. Cell wall formation. Catalyzes the addition of glutamate to the nucleotide precursor UDP-N-acetylmuramoyl-L-alanine (UMA). This Leifsonia xyli subsp. xyli (strain CTCB07) protein is UDP-N-acetylmuramoylalanine--D-glutamate ligase.